We begin with the raw amino-acid sequence, 173 residues long: GTP-dependent dephospho-CoA kinase (173 aa).

6 residues coordinate GTP: Asp-52, Val-53, Val-54, Asp-71, Lys-73, and Asp-122.

Belongs to the GTP-dependent DPCK family.

The catalysed reaction is 3'-dephospho-CoA + GTP = GDP + CoA + H(+). It participates in cofactor biosynthesis; coenzyme A biosynthesis. In terms of biological role, catalyzes the GTP-dependent phosphorylation of the 3'-hydroxyl group of dephosphocoenzyme A to form coenzyme A (CoA). The chain is GTP-dependent dephospho-CoA kinase from Metallosphaera sedula (strain ATCC 51363 / DSM 5348 / JCM 9185 / NBRC 15509 / TH2).